A 308-amino-acid polypeptide reads, in one-letter code: Transaldolase (308 aa).

The active-site Schiff-base intermediate with substrate is the K125.

This sequence belongs to the transaldolase family. Type 1 subfamily. As to quaternary structure, homodimer.

Its subcellular location is the cytoplasm. The catalysed reaction is D-sedoheptulose 7-phosphate + D-glyceraldehyde 3-phosphate = D-erythrose 4-phosphate + beta-D-fructose 6-phosphate. It functions in the pathway carbohydrate degradation; pentose phosphate pathway; D-glyceraldehyde 3-phosphate and beta-D-fructose 6-phosphate from D-ribose 5-phosphate and D-xylulose 5-phosphate (non-oxidative stage): step 2/3. Functionally, transaldolase is important for the balance of metabolites in the pentose-phosphate pathway. The protein is Transaldolase of Pseudomonas entomophila (strain L48).